Reading from the N-terminus, the 81-residue chain is ATP synthase subunit c, chloroplastic (81 aa).

A run of 2 helical transmembrane segments spans residues 3 to 23 and 53 to 73; these read PLIS…ASIG and LLLS…VALA.

The protein belongs to the ATPase C chain family. As to quaternary structure, F-type ATPases have 2 components, F(1) - the catalytic core - and F(0) - the membrane proton channel. F(1) has five subunits: alpha(3), beta(3), gamma(1), delta(1), epsilon(1). F(0) has four main subunits: a(1), b(1), b'(1) and c(10-14). The alpha and beta chains form an alternating ring which encloses part of the gamma chain. F(1) is attached to F(0) by a central stalk formed by the gamma and epsilon chains, while a peripheral stalk is formed by the delta, b and b' chains.

It localises to the plastid. The protein localises to the chloroplast thylakoid membrane. In terms of biological role, f(1)F(0) ATP synthase produces ATP from ADP in the presence of a proton or sodium gradient. F-type ATPases consist of two structural domains, F(1) containing the extramembraneous catalytic core and F(0) containing the membrane proton channel, linked together by a central stalk and a peripheral stalk. During catalysis, ATP synthesis in the catalytic domain of F(1) is coupled via a rotary mechanism of the central stalk subunits to proton translocation. Its function is as follows. Key component of the F(0) channel; it plays a direct role in translocation across the membrane. A homomeric c-ring of between 10-14 subunits forms the central stalk rotor element with the F(1) delta and epsilon subunits. The polypeptide is ATP synthase subunit c, chloroplastic (Angiopteris evecta (Mule's foot fern)).